The sequence spans 263 residues: Polyamine aminopropyltransferase (263 aa).

Positions Met1–Lys221 constitute a PABS domain. Residues Asp98 and Asp126–Gly127 each bind S-methyl-5'-thioadenosine. Asp144 serves as the catalytic Proton acceptor.

It belongs to the spermidine/spermine synthase family. As to quaternary structure, homodimer or homotetramer.

It is found in the cytoplasm. The enzyme catalyses S-adenosyl 3-(methylsulfanyl)propylamine + putrescine = S-methyl-5'-thioadenosine + spermidine + H(+). The protein operates within amine and polyamine biosynthesis; spermidine biosynthesis; spermidine from putrescine: step 1/1. In terms of biological role, catalyzes the irreversible transfer of a propylamine group from the amino donor S-adenosylmethioninamine (decarboxy-AdoMet) to putrescine (1,4-diaminobutane) to yield spermidine. This is Polyamine aminopropyltransferase from Neisseria meningitidis serogroup A / serotype 4A (strain DSM 15465 / Z2491).